The following is a 388-amino-acid chain: Chaperone protein DnaJ (388 aa).

In terms of domain architecture, J spans 5–70 (DYYEVLGVAR…QKRAAYDRFG (66 aa)). Residues 141–219 (GKTETIRLPT…CGGAGRVTRE (79 aa)) form a CR-type zinc finger. 8 residues coordinate Zn(2+): C154, C157, C171, C174, C193, C196, C207, and C210. CXXCXGXG motif repeat units follow at residues 154 to 161 (CEVCAGSG), 171 to 178 (CPTCGGYG), 193 to 200 (CPNCHGRG), and 207 to 214 (CTACGGAG).

The protein belongs to the DnaJ family. Homodimer. Requires Zn(2+) as cofactor.

It is found in the cytoplasm. Participates actively in the response to hyperosmotic and heat shock by preventing the aggregation of stress-denatured proteins and by disaggregating proteins, also in an autonomous, DnaK-independent fashion. Unfolded proteins bind initially to DnaJ; upon interaction with the DnaJ-bound protein, DnaK hydrolyzes its bound ATP, resulting in the formation of a stable complex. GrpE releases ADP from DnaK; ATP binding to DnaK triggers the release of the substrate protein, thus completing the reaction cycle. Several rounds of ATP-dependent interactions between DnaJ, DnaK and GrpE are required for fully efficient folding. Also involved, together with DnaK and GrpE, in the DNA replication of plasmids through activation of initiation proteins. The polypeptide is Chaperone protein DnaJ (Methylobacterium nodulans (strain LMG 21967 / CNCM I-2342 / ORS 2060)).